Here is a 418-residue protein sequence, read N- to C-terminus: AP-3 complex subunit mu-1 (418 aa).

The MHD domain maps to 176–417 (NNEAYFDVVE…ITKAGKFQVR (242 aa)).

Belongs to the adaptor complexes medium subunit family. As to quaternary structure, adaptor protein complex 3 (AP-3) is a heterotetramer composed of two large adaptins (delta-type subunit AP3D1 and beta-type subunit AP3B1 or AP3B2), a medium adaptin (mu-type subunit AP3M1 or AP3M2) and a small adaptin (sigma-type subunit APS1 or AP3S2). Interacts with AGAP1. AP-3 associates with the BLOC-1 complex.

It localises to the golgi apparatus. The protein resides in the cytoplasmic vesicle membrane. In terms of biological role, part of the AP-3 complex, an adaptor-related complex which is not clathrin-associated. The complex is associated with the Golgi region as well as more peripheral structures. It facilitates the budding of vesicles from the Golgi membrane and may be directly involved in trafficking to lysosomes. In concert with the BLOC-1 complex, AP-3 is required to target cargos into vesicles assembled at cell bodies for delivery into neurites and nerve terminals. In Rattus norvegicus (Rat), this protein is AP-3 complex subunit mu-1 (Ap3m1).